Consider the following 186-residue polypeptide: Nucleoside triphosphate pyrophosphatase (186 aa).

Aspartate 68 serves as the catalytic Proton acceptor.

It belongs to the Maf family. Requires a divalent metal cation as cofactor.

Its subcellular location is the cytoplasm. It catalyses the reaction a ribonucleoside 5'-triphosphate + H2O = a ribonucleoside 5'-phosphate + diphosphate + H(+). The catalysed reaction is a 2'-deoxyribonucleoside 5'-triphosphate + H2O = a 2'-deoxyribonucleoside 5'-phosphate + diphosphate + H(+). Functionally, nucleoside triphosphate pyrophosphatase. May have a dual role in cell division arrest and in preventing the incorporation of modified nucleotides into cellular nucleic acids. This is Nucleoside triphosphate pyrophosphatase from Prochlorococcus marinus (strain MIT 9303).